We begin with the raw amino-acid sequence, 512 residues long: Multidrug resistance protein 3 (512 aa).

Helical transmembrane passes span 13–33 (FVVLGLLLGILMSAMDNTIVA), 48–68 (KFAWVTASYMVAVMAGMPIYG), 79–99 (FFLFGLIFFLIGSALCGIAQT), 109–129 (IQGIGGGALLPIAFTIIFDLF), 139–159 (GMFGAVFGLSSVLGPLLGAII), 163–183 (ISWHWVFYINVPIGALSLFFI), 200–220 (WGGAITLVVSIVCLMFALELG), 228–248 (SIQIIGLFIVFAVFFIAFFIV), 272–292 (ILAFLYGGTFIILAVFIPIFV), 304–324 (GFILTPMMIGSVIGSMIGGIF), 333–353 (LMLISVIAFFIGMLLLSNMTP), 358–378 (VWLTVFMMISGFGVGFNFSLL), 399–421 (SFLRSFGMTLGVTIFGTVQTNVF), and 475–495 (ITYVFLLALIPIVLAAVTILF).

The protein belongs to the major facilitator superfamily. EmrB family.

It is found in the cell membrane. Confers resistance to puromycin, tosufloxacin and norfloxacin. The sequence is that of Multidrug resistance protein 3 (bmr3) from Bacillus subtilis (strain 168).